A 218-amino-acid chain; its full sequence is 7-cyano-7-deazaguanine synthase (218 aa).

Residue 9 to 19 (YSGGMDSFTVL) coordinates ATP. 4 residues coordinate Zn(2+): Cys185, Cys193, Cys196, and Cys199.

The protein belongs to the QueC family. Zn(2+) serves as cofactor.

It carries out the reaction 7-carboxy-7-deazaguanine + NH4(+) + ATP = 7-cyano-7-deazaguanine + ADP + phosphate + H2O + H(+). Its pathway is purine metabolism; 7-cyano-7-deazaguanine biosynthesis. Its function is as follows. Catalyzes the ATP-dependent conversion of 7-carboxy-7-deazaguanine (CDG) to 7-cyano-7-deazaguanine (preQ(0)). In Alteromonas mediterranea (strain DSM 17117 / CIP 110805 / LMG 28347 / Deep ecotype), this protein is 7-cyano-7-deazaguanine synthase.